A 544-amino-acid chain; its full sequence is Chaperonin GroEL (544 aa).

Residues 29 to 32 (TLGP), Lys50, 86 to 90 (DGTTT), Gly414, and Asp495 contribute to the ATP site.

This sequence belongs to the chaperonin (HSP60) family. Forms a cylinder of 14 subunits composed of two heptameric rings stacked back-to-back. Interacts with the co-chaperonin GroES.

It is found in the cytoplasm. The catalysed reaction is ATP + H2O + a folded polypeptide = ADP + phosphate + an unfolded polypeptide.. Together with its co-chaperonin GroES, plays an essential role in assisting protein folding. The GroEL-GroES system forms a nano-cage that allows encapsulation of the non-native substrate proteins and provides a physical environment optimized to promote and accelerate protein folding. The protein is Chaperonin GroEL of Treponema pallidum subsp. pallidum (strain SS14).